The sequence spans 270 residues: Proteasome subunit alpha (270 aa).

Residues 229–270 (LLDTEAAGSTPTDAPSDTEDGDSTDGTDRADGTTDSTEETEK) form a disordered region. Residues 244-253 (SDTEDGDSTD) show a composition bias toward acidic residues.

This sequence belongs to the peptidase T1A family. The 20S proteasome core is composed of 14 alpha and 14 beta subunits that assemble into four stacked heptameric rings, resulting in a barrel-shaped structure. The two inner rings, each composed of seven catalytic beta subunits, are sandwiched by two outer rings, each composed of seven alpha subunits. The catalytic chamber with the active sites is on the inside of the barrel. Has a gated structure, the ends of the cylinder being occluded by the N-termini of the alpha-subunits. Is capped by the proteasome-associated ATPase, ARC.

It localises to the cytoplasm. The protein operates within protein degradation; proteasomal Pup-dependent pathway. Its activity is regulated as follows. The formation of the proteasomal ATPase ARC-20S proteasome complex, likely via the docking of the C-termini of ARC into the intersubunit pockets in the alpha-rings, may trigger opening of the gate for substrate entry. Interconversion between the open-gate and close-gate conformations leads to a dynamic regulation of the 20S proteasome proteolysis activity. Functionally, component of the proteasome core, a large protease complex with broad specificity involved in protein degradation. The polypeptide is Proteasome subunit alpha (Streptomyces griseus subsp. griseus (strain JCM 4626 / CBS 651.72 / NBRC 13350 / KCC S-0626 / ISP 5235)).